An 848-amino-acid polypeptide reads, in one-letter code: Protein SEY1 (848 aa).

The Cytoplasmic portion of the chain corresponds to 1–733; that stretch reads MNGNFAAVGS…KRGALGGMTQ (733 aa). In terms of domain architecture, GB1/RHD3-type G spans 47-277; the sequence is GFNYHLISVF…FVGGVFLPEY (231 aa). 57 to 64 provides a ligand contact to GTP; sequence GSQSTGKS. The helical transmembrane segment at 734–754 threads the bilayer; that stretch reads VPLYFWIALFAFGWNEIWMVI. At 755 to 757 the chain is on the lumenal side; sequence RNP. A helical membrane pass occupies residues 758 to 778; sequence FLFILLLLSAGGTYVAYNLSL. The Cytoplasmic portion of the chain corresponds to 779 to 848; it reads LGPMMQMTNA…KKKDYDDDGI (70 aa). Positions 815 to 848 are disordered; sequence LAMPASSKSSGGEQVRMDTLDSKGKKKDYDDDGI. The segment covering 829 to 848 has biased composition (basic and acidic residues); that stretch reads VRMDTLDSKGKKKDYDDDGI.

The protein belongs to the TRAFAC class dynamin-like GTPase superfamily. GB1/RHD3 GTPase family. RHD3 subfamily.

The protein resides in the endoplasmic reticulum membrane. Functionally, cooperates with the reticulon proteins and tubule-shaping DP1 family proteins to generate and maintain the structure of the tubular endoplasmic reticulum network. Has GTPase activity, which is required for its function in ER organization. The chain is Protein SEY1 from Pyricularia oryzae (strain 70-15 / ATCC MYA-4617 / FGSC 8958) (Rice blast fungus).